We begin with the raw amino-acid sequence, 1150 residues long: Cell division cycle and apoptosis regulator protein 1 (1150 aa).

An interaction with AR region spans residues 1 to 249 (MAQFGGQKNP…TQPQPQSLLQ (249 aa)). Disordered stretches follow at residues 124–146 (PTAQ…QPQK) and 285–354 (IVSQ…SPRR). A compositionally biased stretch (low complexity) spans 134 to 146 (TPRSSQQQTQPQK). The interaction with GATA2 stretch occupies residues 203-660 (QRIQTLPNQN…RALSSKGLKS (458 aa)). 2 stretches are compositionally biased toward basic and acidic residues: residues 293–334 (RRLD…ERSP) and 341–352 (ERSPRRERERSP). Position 456 is a phosphoserine (S456). A coiled-coil region spans residues 594-618 (KQQLVEKLQGERKEADGEQDEEEKD). A disordered region spans residues 600–638 (KLQGERKEADGEQDEEEKDDGEAKEISTPTHWSKLDPKT). A compositionally biased stretch (acidic residues) spans 610–621 (GEQDEEEKDDGE). The residue at position 627 (T627) is a Phosphothreonine. In terms of domain architecture, SAP spans 636-670 (PKTMKVNDLRKELESRALSSKGLKSQLIARLTKQL). A Glycyl lysine isopeptide (Lys-Gly) (interchain with G-Cter in ubiquitin) cross-link involves residue K637. Positions 643–1150 (DLRKELESRA…QKSKENGASV (508 aa)) are interaction with GATA1. T667 bears the Phosphothreonine mark. 4 stretches are compositionally biased toward basic and acidic residues: residues 673–687 (EEQK…KSEK), 694–713 (DRKS…EEIE), 796–817 (KEDK…KKEE), and 832–855 (SGDD…KDDS). 2 disordered regions span residues 673–713 (EEQK…EEIE) and 796–915 (KEDK…EKEK). Residues S685 and S697 each carry the phosphoserine modification. Over residues 856–889 (KDDDETEEDNNQDEYDPMEAEEAEDEEDDRDEEE) the composition is skewed to acidic residues. Phosphothreonine is present on T861. Positions 890–915 (MTKRDDKRDINRYCKERPSKDKEKEK) are enriched in basic and acidic residues. A Glycyl lysine isopeptide (Lys-Gly) (interchain with G-Cter in SUMO1); alternate cross-link involves residue K1012. A Glycyl lysine isopeptide (Lys-Gly) (interchain with G-Cter in SUMO2); alternate cross-link involves residue K1012. The stretch at 1033 to 1114 (DVGSLLQKLE…LQFENQMNKT (82 aa)) forms a coiled coil. Residues K1067 and K1135 each participate in a glycyl lysine isopeptide (Lys-Gly) (interchain with G-Cter in SUMO2) cross-link.

As to quaternary structure, directly interacts with ESR1, NR3C1 and p53/TP53. Interacts (via N-terminus) with CALCOCO1. Interacts with MED1. Interacts with GATA1. Interacts with AR and GATA2. As to expression, expressed in various epithelial cancer cell lines, including breast, colon, prostate, pancreatic and leukemia. Expression is regulated by growth factors.

The protein resides in the cytoplasm. Its subcellular location is the perinuclear region. In terms of biological role, associates with components of the Mediator and p160 coactivator complexes that play a role as intermediaries transducing regulatory signals from upstream transcriptional activator proteins to basal transcription machinery at the core promoter. Recruited to endogenous nuclear receptor target genes in response to the appropriate hormone. Also functions as a p53 coactivator. May thus play an important role in transcriptional regulation. May be involved in apoptosis signaling in the presence of the reinoid CD437. Apoptosis induction involves sequestration of 14-3-3 protein(s) and mediated altered expression of multiple cell cycle regulatory genes including MYC, CCNB1 and CDKN1A. Plays a role in cell cycle progression and/or cell proliferation. In association with CALCOCO1 enhances GATA1- and MED1-mediated transcriptional activation from the gamma-globin promoter during erythroid differentiation of K562 erythroleukemia cells. Can act as a both a coactivator and corepressor of AR-mediated transcription. Contributes to chromatin looping and AR transcription complex assembly by stabilizing AR-GATA2 association on chromatin and facilitating MED1 and RNA polymerase II recruitment to AR-binding sites. May play an important role in the growth and tumorigenesis of prostate cancer cells. This is Cell division cycle and apoptosis regulator protein 1 (CCAR1) from Homo sapiens (Human).